We begin with the raw amino-acid sequence, 353 residues long: DNA polymerase IV (353 aa).

The UmuC domain maps to 6 to 187 (IIHVDCDCFY…LPVSKLHGVG (182 aa)). Mg(2+) contacts are provided by Asp10 and Asp105. Residue Glu106 is part of the active site.

It belongs to the DNA polymerase type-Y family. Monomer. It depends on Mg(2+) as a cofactor.

It localises to the cytoplasm. It carries out the reaction DNA(n) + a 2'-deoxyribonucleoside 5'-triphosphate = DNA(n+1) + diphosphate. In terms of biological role, poorly processive, error-prone DNA polymerase involved in untargeted mutagenesis. Copies undamaged DNA at stalled replication forks, which arise in vivo from mismatched or misaligned primer ends. These misaligned primers can be extended by PolIV. Exhibits no 3'-5' exonuclease (proofreading) activity. May be involved in translesional synthesis, in conjunction with the beta clamp from PolIII. The chain is DNA polymerase IV from Pseudomonas fluorescens (strain Pf0-1).